Here is a 211-residue protein sequence, read N- to C-terminus: Endonuclease III (211 aa).

The region spanning 108-127 (REALEALAGVGRKTANVVLN) is the HhH domain. Residues cysteine 187, cysteine 194, cysteine 197, and cysteine 203 each coordinate [4Fe-4S] cluster.

It belongs to the Nth/MutY family. It depends on [4Fe-4S] cluster as a cofactor.

The catalysed reaction is 2'-deoxyribonucleotide-(2'-deoxyribose 5'-phosphate)-2'-deoxyribonucleotide-DNA = a 3'-end 2'-deoxyribonucleotide-(2,3-dehydro-2,3-deoxyribose 5'-phosphate)-DNA + a 5'-end 5'-phospho-2'-deoxyribonucleoside-DNA + H(+). DNA repair enzyme that has both DNA N-glycosylase activity and AP-lyase activity. The DNA N-glycosylase activity releases various damaged pyrimidines from DNA by cleaving the N-glycosidic bond, leaving an AP (apurinic/apyrimidinic) site. The AP-lyase activity cleaves the phosphodiester bond 3' to the AP site by a beta-elimination, leaving a 3'-terminal unsaturated sugar and a product with a terminal 5'-phosphate. This chain is Endonuclease III, found in Haemophilus influenzae (strain ATCC 51907 / DSM 11121 / KW20 / Rd).